The primary structure comprises 229 residues: Peptidase E (229 aa).

Active-site charge relay system residues include serine 120, aspartate 135, and histidine 157.

The protein belongs to the peptidase S51 family.

It is found in the cytoplasm. It carries out the reaction Dipeptidase E catalyzes the hydrolysis of dipeptides Asp-|-Xaa. It does not act on peptides with N-terminal Glu, Asn or Gln, nor does it cleave isoaspartyl peptides.. In terms of biological role, hydrolyzes dipeptides containing N-terminal aspartate residues. May play a role in allowing the cell to use peptide aspartate to spare carbon otherwise required for the synthesis of the aspartate family of amino acids. This Salmonella typhi protein is Peptidase E.